A 455-amino-acid chain; its full sequence is Phosphomethylpyrimidine synthase (455 aa).

Residues Asn80, Met109, Tyr139, His175, 195–197 (SRG), 236–239 (DALR), and Glu275 contribute to the substrate site. Position 279 (His279) interacts with Zn(2+). Tyr302 contributes to the substrate binding site. His343 is a Zn(2+) binding site. 3 residues coordinate [4Fe-4S] cluster: Cys423, Cys426, and Cys431.

It belongs to the ThiC family. The cofactor is [4Fe-4S] cluster.

The enzyme catalyses 5-amino-1-(5-phospho-beta-D-ribosyl)imidazole + S-adenosyl-L-methionine = 4-amino-2-methyl-5-(phosphooxymethyl)pyrimidine + CO + 5'-deoxyadenosine + formate + L-methionine + 3 H(+). Its pathway is cofactor biosynthesis; thiamine diphosphate biosynthesis. Functionally, catalyzes the synthesis of the hydroxymethylpyrimidine phosphate (HMP-P) moiety of thiamine from aminoimidazole ribotide (AIR) in a radical S-adenosyl-L-methionine (SAM)-dependent reaction. The polypeptide is Phosphomethylpyrimidine synthase (Synechococcus sp. (strain JA-3-3Ab) (Cyanobacteria bacterium Yellowstone A-Prime)).